The primary structure comprises 431 residues: Inactive polypeptide N-acetylgalactosaminyltransferase-like protein 5 (431 aa).

Over 1 to 4 the chain is Cytoplasmic; it reads MKSV. The chain crosses the membrane as a helical; Signal-anchor for type II membrane protein span at residues 5 to 27; it reads IIQGLFCGFLAIGLWASMLLLFL. Residues 28-431 lie on the Lumenal side of the membrane; the sequence is HLEQEDMLEN…TERKRKKNRF (404 aa). The N-linked (GlcNAc...) asparagine glycan is linked to N68. Cystine bridges form between C105–C336 and C327–C403. The catalytic subdomain A stretch occupies residues 114 to 224; sequence LPTASIIICF…RVWLEPLLHA (111 aa). Residues 282–344 form a catalytic subdomain B region; that stretch reads PIRSPAMTGG…PCSRVGYNSK (63 aa). 2 N-linked (GlcNAc...) asparagine glycosylation sites follow: N353 and N390.

It belongs to the glycosyltransferase 2 family. GalNAc-T subfamily. The cofactor is Mn(2+). Expressed in testis. Mainly expressed in the round and elongated spermatids during spermiogenesis, not in the outermost cells of the seminiferous tubules, which contain spermatogonia and somatic Sertoli cells. Present in the juxtanuclear space in the round spermatids, not in the acrosomal vesicles. In the elongating spermatids, localizes strongly in the acroplaxome, the region between the developing acrosome and nucleus. During differentiation, also weakly detected in the transient manchette containing microtubules. In epididymal spermatozoa, weakly detected in the midpiece, but concentrates mainly in the neck region around the head-tail coupling apparatus (at protein level).

The protein resides in the late endosome membrane. Its function is as follows. Probable inactive glycosyltransferase required during spermatid development. May participate in protein loading into the acrosomes and accumulation of ubiquitin-proteasome systems around the head-tail coupling apparatus region. This is Inactive polypeptide N-acetylgalactosaminyltransferase-like protein 5 (Galntl5) from Mus musculus (Mouse).